We begin with the raw amino-acid sequence, 387 residues long: 1-deoxy-D-xylulose 5-phosphate reductoisomerase (387 aa).

NADPH contacts are provided by Thr-10, Gly-11, Ser-12, Ile-13, Gly-36, Lys-37, Asn-38, and Asn-123. Lys-124 is a 1-deoxy-D-xylulose 5-phosphate binding site. An NADPH-binding site is contributed by Glu-125. Asp-149 provides a ligand contact to Mn(2+). The 1-deoxy-D-xylulose 5-phosphate site is built by Ser-150, Glu-151, Ser-175, and His-198. Glu-151 contributes to the Mn(2+) binding site. An NADPH-binding site is contributed by Gly-204. Positions 211, 216, 217, and 220 each coordinate 1-deoxy-D-xylulose 5-phosphate. Glu-220 provides a ligand contact to Mn(2+).

The protein belongs to the DXR family. The cofactor is Mg(2+). It depends on Mn(2+) as a cofactor.

The enzyme catalyses 2-C-methyl-D-erythritol 4-phosphate + NADP(+) = 1-deoxy-D-xylulose 5-phosphate + NADPH + H(+). Its pathway is isoprenoid biosynthesis; isopentenyl diphosphate biosynthesis via DXP pathway; isopentenyl diphosphate from 1-deoxy-D-xylulose 5-phosphate: step 1/6. In terms of biological role, catalyzes the NADPH-dependent rearrangement and reduction of 1-deoxy-D-xylulose-5-phosphate (DXP) to 2-C-methyl-D-erythritol 4-phosphate (MEP). The chain is 1-deoxy-D-xylulose 5-phosphate reductoisomerase from Pelotomaculum thermopropionicum (strain DSM 13744 / JCM 10971 / SI).